Reading from the N-terminus, the 119-residue chain is Beta-2-microglobulin (119 aa).

Positions 1–21 are cleaved as a signal peptide; the sequence is MGKAAAVVLVTLVALLGLAQA. Residues 25-113 form the Ig-like C1-type domain; the sequence is PKVQVYSRFP…HETLKEPQVY (89 aa). Cysteines 45 and 100 form a disulfide.

This sequence belongs to the beta-2-microglobulin family. As to quaternary structure, heterodimer of an alpha chain and a beta chain. Beta-2-microglobulin is the beta-chain of major histocompatibility complex class I molecules.

It is found in the secreted. Functionally, component of the class I major histocompatibility complex (MHC). Involved in the presentation of peptide antigens to the immune system. This chain is Beta-2-microglobulin (B2M), found in Gallus gallus (Chicken).